Reading from the N-terminus, the 262-residue chain is MSAHANHPFHLVDYSPWPLTGAIGAMTTVSGLVQWFHQYTMTLFILGNIITILTMYQWWRDISREGTFQGLHTFPVTIGLRWGMILFIVSEIFFFISFFWAFFHSSLSPTIELGMTWPPVGIIAFNPFQIPLLNTAILLASGVTVTWAHHALMESNHSQATQGLFFTIVLGIYFSILQAYEYIEAPFTIADAVYGSTFYMATGFHGLHVLIGTTFLLICFLRHINFHFSKNHHFGFEAAAWYWHFVDVVWLFLYISIYWWGS.

6 helical membrane passes run 39–59, 83–103, 120–140, 163–183, 201–221, and 240–260; these read YTMTLFILGNIITILTMYQWW, GMILFIVSEIFFFISFFWAFF, VGIIAFNPFQIPLLNTAILLA, GLFFTIVLGIYFSILQAYEYI, ATGFHGLHVLIGTTFLLICFL, and AWYWHFVDVVWLFLYISIYWW.

The protein belongs to the cytochrome c oxidase subunit 3 family. Component of the cytochrome c oxidase (complex IV, CIV), a multisubunit enzyme composed of a catalytic core of 3 subunits and several supernumerary subunits. The complex exists as a monomer or a dimer and forms supercomplexes (SCs) in the inner mitochondrial membrane with ubiquinol-cytochrome c oxidoreductase (cytochrome b-c1 complex, complex III, CIII).

The protein localises to the mitochondrion inner membrane. The enzyme catalyses 4 Fe(II)-[cytochrome c] + O2 + 8 H(+)(in) = 4 Fe(III)-[cytochrome c] + 2 H2O + 4 H(+)(out). In terms of biological role, component of the cytochrome c oxidase, the last enzyme in the mitochondrial electron transport chain which drives oxidative phosphorylation. The respiratory chain contains 3 multisubunit complexes succinate dehydrogenase (complex II, CII), ubiquinol-cytochrome c oxidoreductase (cytochrome b-c1 complex, complex III, CIII) and cytochrome c oxidase (complex IV, CIV), that cooperate to transfer electrons derived from NADH and succinate to molecular oxygen, creating an electrochemical gradient over the inner membrane that drives transmembrane transport and the ATP synthase. Cytochrome c oxidase is the component of the respiratory chain that catalyzes the reduction of oxygen to water. Electrons originating from reduced cytochrome c in the intermembrane space (IMS) are transferred via the dinuclear copper A center (CU(A)) of subunit 2 and heme A of subunit 1 to the active site in subunit 1, a binuclear center (BNC) formed by heme A3 and copper B (CU(B)). The BNC reduces molecular oxygen to 2 water molecules using 4 electrons from cytochrome c in the IMS and 4 protons from the mitochondrial matrix. The sequence is that of Cytochrome c oxidase subunit 3 (COIII) from Anopheles quadrimaculatus (Common malaria mosquito).